The primary structure comprises 87 residues: Small ribosomal subunit protein bS16 (87 aa).

Belongs to the bacterial ribosomal protein bS16 family.

This chain is Small ribosomal subunit protein bS16, found in Variovorax paradoxus (strain S110).